The following is a 156-amino-acid chain: Transcription antitermination protein NusB (156 aa).

Belongs to the NusB family.

Its function is as follows. Involved in transcription antitermination. Required for transcription of ribosomal RNA (rRNA) genes. Binds specifically to the boxA antiterminator sequence of the ribosomal RNA (rrn) operons. In Mycobacterium bovis (strain ATCC BAA-935 / AF2122/97), this protein is Transcription antitermination protein NusB.